A 427-amino-acid polypeptide reads, in one-letter code: L-glutamine:2-deoxy-scyllo-inosose aminotransferase (427 aa).

The interval 1–20 (MPLQSSRLAVDNGTPVRGKP) is disordered. Position 205 is an N6-(pyridoxal phosphate)lysine (Lys-205).

This sequence belongs to the DegT/DnrJ/EryC1 family. L-glutamine:2-deoxy-scyllo-inosose/scyllo-inosose aminotransferase subfamily. Pyridoxal 5'-phosphate is required as a cofactor.

It catalyses the reaction 2-deoxy-L-scyllo-inosose + L-glutamine = 2-deoxy-scyllo-inosamine + 2-oxoglutaramate. The catalysed reaction is 3-amino-2,3-dideoxy-scyllo-inosose + L-glutamine = 2-deoxystreptamine + 2-oxoglutaramate. The protein operates within metabolic intermediate biosynthesis; 2-deoxystreptamine biosynthesis; 2-deoxystreptamine from D-glucose 6-phosphate: step 2/4. It participates in antibiotic biosynthesis; kanamycin biosynthesis. Its function is as follows. Catalyzes the PLP-dependent transamination of 2-deoxy-scyllo-inosose (2-DOI) to form 2-deoxy-scyllo-inosamine (2-DOIA) using L-glutamine as the amino donor. Also catalyzes the transamination of 3-amino-2,3-dideoxy-scyllo-inosose (keto-2-DOIA) into 2-deoxystreptamine (2-DOS). This chain is L-glutamine:2-deoxy-scyllo-inosose aminotransferase (kanB), found in Streptomyces kanamyceticus.